The chain runs to 370 residues: 2-Hydroxyacid oxidase 1 (370 aa).

Residues 1-365 enclose the FMN hydroxy acid dehydrogenase domain; that stretch reads MLPRLICIND…DKTLVRKNPL (365 aa). Tyr26 contributes to the glyoxylate binding site. Residues 79 to 81, Ser108, and Gln130 contribute to the FMN site; that span reads ATA. Glyoxylate is bound at residue Tyr132. Thr158 is an FMN binding site. Arg167 contributes to the glyoxylate binding site. At Lys184 the chain carries N6-succinyllysine. A phosphoserine mark is found at Ser194 and Ser230. Residues Lys236 and Ser258 each coordinate FMN. 2 residues coordinate glyoxylate: His260 and Arg263. The active-site Proton acceptor is His260. FMN-binding positions include 291 to 295 and 314 to 315; these read DGGVR and GR. The Microbody targeting signal signature appears at 368–370; that stretch reads SKI.

Belongs to the FMN-dependent alpha-hydroxy acid dehydrogenase family. In terms of assembly, homotetramer. FMN serves as cofactor. Highly expressed in liver.

It localises to the peroxisome matrix. It carries out the reaction a (2S)-2-hydroxycarboxylate + O2 = a 2-oxocarboxylate + H2O2. The enzyme catalyses glycolate + O2 = glyoxylate + H2O2. It catalyses the reaction glyoxylate + O2 + H2O = oxalate + H2O2 + H(+). The catalysed reaction is 2-hydroxyhexadecanoate + O2 = 2-oxohexadecanoate + H2O2. It carries out the reaction 2-hydroxyoctanoate + O2 = 2-oxooctanoate + H2O2. Its pathway is amino-acid biosynthesis; glycine biosynthesis. Its activity is regulated as follows. Inhibited by its product oxalate. Inhibited by high concentrations of dichlorophenolindophenol (DCIP) in vitro. In terms of biological role, broad substrate specificity (S)-2-hydroxy-acid oxidase that preferentially oxidizes glycolate. The glyoxylate produced by the oxidation of glycolate can then be utilized by alanine-glyoxylate aminotransferase for the peroxisomal synthesis of glycine; this pathway appears to be an important step for the detoxification of glyoxylate which, if allowed to accumulate, may be metabolized to oxalate with formation of kidney stones. Can also catalyze the oxidation of glyoxylate, and long chain hydroxyacids such as 2-hydroxyhexadecanoate and 2-hydroxyoctanoate, albeit with much lower catalytic efficiency. Active in vitro with the artificial electron acceptor 2,6-dichlorophenolindophenol (DCIP), but O2 is believed to be the physiological electron acceptor, leading to the production of H2O2. Is not active on L-lactate and 2-hydroxybutanoate. This chain is 2-Hydroxyacid oxidase 1, found in Homo sapiens (Human).